An 86-amino-acid polypeptide reads, in one-letter code: Small ribosomal subunit protein bS20 (86 aa).

The segment covering 1 to 11 (MANIKQQKKRN) has biased composition (basic residues). Residues 1–21 (MANIKQQKKRNKTNEKRRLQN) form a disordered region.

It belongs to the bacterial ribosomal protein bS20 family.

Binds directly to 16S ribosomal RNA. In Onion yellows phytoplasma (strain OY-M), this protein is Small ribosomal subunit protein bS20.